We begin with the raw amino-acid sequence, 184 residues long: Ribosome-recycling factor (184 aa).

It belongs to the RRF family.

It is found in the cytoplasm. In terms of biological role, responsible for the release of ribosomes from messenger RNA at the termination of protein biosynthesis. May increase the efficiency of translation by recycling ribosomes from one round of translation to another. This chain is Ribosome-recycling factor, found in Oleidesulfovibrio alaskensis (strain ATCC BAA-1058 / DSM 17464 / G20) (Desulfovibrio alaskensis).